Consider the following 407-residue polypeptide: Naringenin 8-dimethylallyltransferase 2, chloroplastic (407 aa).

Residues 1 to 23 (MGFVLPASFPGASSITTGGSCLR) constitute a chloroplast transit peptide. 8 helical membrane-spanning segments follow: residues 117–137 (FCRP…SLVA), 145–165 (SLAF…IHIF), 206–226 (ILGL…TVFI), 248–268 (VLTA…GFFL), 285–305 (LIFC…FKDI), 328–348 (VFWI…LVGA), 352–372 (ILWS…VLWY), and 383–403 (VVLQ…YCLI).

The protein belongs to the UbiA prenyltransferase family. Mg(2+) serves as cofactor. The cofactor is Mn(2+).

It localises to the plastid. The protein localises to the chloroplast membrane. It catalyses the reaction (2S)-naringenin + dimethylallyl diphosphate = sophoraflavanone B + diphosphate. In terms of biological role, involved in the biosynthesis of sophoraflavanone G (SFG). Can use flavanones (naringenin, liquiritigenin and hesperetin) as substrates, but not flavonols or isoflavones. Shows a strict specificity for dimethylallyl diphosphate. The sequence is that of Naringenin 8-dimethylallyltransferase 2, chloroplastic (N8DT-2) from Sophora flavescens (Shrubby sophora).